Here is a 531-residue protein sequence, read N- to C-terminus: Zinc finger CCCH-type with G patch domain-containing protein (531 aa).

Met1 is subject to N-acetylmethionine. The interval 91–133 (EAPAAARGSGSETVPKAEAGPESAAGGQEEEEGEDEEELSGTK) is disordered. Positions 107–117 (AEAGPESAAGG) are enriched in low complexity. Over residues 118–129 (QEEEEGEDEEEL) the composition is skewed to acidic residues. The C3H1-type zinc-finger motif lies at 175 to 201 (KSLKPCPFFLEGKCRFKENCRFSHGQV). A disordered region spans residues 267 to 289 (PPLRTEATESDSDSDGTGDSSYA). Residues 333–379 (TRGIGSRLLTKMGYEFGKGLGRHAEGRVEPIHAVVLPRGKSLDQCVE) form the G-patch domain. Ser373 bears the Phosphoserine mark. 3 disordered regions span residues 385 to 409 (TRVG…GGRP), 426 to 446 (APGA…DMYH), and 509 to 531 (RAQE…MTEF). Positions 426-438 (APGALEAGAAPAG) are enriched in low complexity. Residues 518–531 (EQRKADTHKKMTEF) show a composition bias toward basic and acidic residues.

As to quaternary structure, interacts with CHD4/Mi-2; the interaction is direct. Post-translationally, ubiquitinated in case of infection by HIV-1, leading to its degradation. Ubiquitination is mediated by the CUL4A-RBX1-DDB1-DCAF1/VPRBP complex that is hijacked by HIV-1 via interaction between HIV-1 Vpr and DCAF1/VPRBP. Widely expressed.

The protein resides in the nucleus. Functionally, transcription repressor that specifically binds the 5'-GGAG[GA]A[GA]A-3' consensus sequence. Represses transcription by recruiting the chromatin multiprotein complex NuRD to target promoters. Negatively regulates expression of EGFR, a gene involved in cell proliferation, survival and migration. Its ability to repress genes of the EGFR pathway suggest it may act as a tumor suppressor. Able to suppress breast carcinogenesis. Antagonizes the transcription repression by isoform 1 by competing for the binding of the NuRD complex. Does not bind DNA. The sequence is that of Zinc finger CCCH-type with G patch domain-containing protein (ZGPAT) from Homo sapiens (Human).